A 335-amino-acid chain; its full sequence is Beta-hexosaminidase (335 aa).

Substrate is bound by residues Asp60, Arg68, Arg133, and Lys163–His164. His176 serves as the catalytic Proton donor/acceptor. Residue Asp247 is the Nucleophile of the active site.

Belongs to the glycosyl hydrolase 3 family. NagZ subfamily.

The protein localises to the cytoplasm. The enzyme catalyses Hydrolysis of terminal non-reducing N-acetyl-D-hexosamine residues in N-acetyl-beta-D-hexosaminides.. It participates in cell wall biogenesis; peptidoglycan recycling. In terms of biological role, plays a role in peptidoglycan recycling by cleaving the terminal beta-1,4-linked N-acetylglucosamine (GlcNAc) from peptide-linked peptidoglycan fragments, giving rise to free GlcNAc, anhydro-N-acetylmuramic acid and anhydro-N-acetylmuramic acid-linked peptides. The polypeptide is Beta-hexosaminidase (Xylella fastidiosa (strain M23)).